We begin with the raw amino-acid sequence, 357 residues long: Homoserine kinase (357 aa).

Belongs to the GHMP kinase family. Homoserine kinase subfamily. As to quaternary structure, homodimer.

It catalyses the reaction L-homoserine + ATP = O-phospho-L-homoserine + ADP + H(+). The protein operates within amino-acid biosynthesis; L-threonine biosynthesis; L-threonine from L-aspartate: step 4/5. In terms of biological role, commits homoserine to the threonine biosynthesis pathway by catalyzing its O-phosphorylation. The protein is Homoserine kinase (THR1) of Candida albicans (strain SC5314 / ATCC MYA-2876) (Yeast).